Here is an 838-residue protein sequence, read N- to C-terminus: Transforming acidic coiled-coil-containing protein 3 (838 aa).

N-acetylserine is present on Ser-2. 3 positions are modified to phosphoserine: Ser-25, Ser-39, and Ser-71. The disordered stretch occupies residues 123 to 227 (EADTDLLGDA…HGAEEECKAE (105 aa)). Residues 132–164 (ASPAFGSGSSSESGPGALADLDCSSSSQSPGSS) show a composition bias toward low complexity. Ser-175 and Ser-177 each carry phosphoserine. Positions 204–227 (DPCRTESQHKAETPHGAEEECKAE) are enriched in basic and acidic residues. Phosphoserine is present on residues Ser-250, Ser-317, and Ser-402. The disordered stretch occupies residues 311-527 (GRAMTLSPQE…LELKEESFRD (217 aa)). Basic and acidic residues predominate over residues 403 to 412 (YHLDWDKMDD). A Phosphoserine modification is found at Ser-434. A compositionally biased stretch (polar residues) spans 492 to 503 (NSASTSLPTSCP). The interval 522–577 (EESFRDPAEVLGTGAEVDYLEQFGTSSFKESALRKQSLYLKFDPLLRDSPGRPVPV) is necessary but not sufficient for spindle localization. Ser-558 bears the Phosphoserine; by AURKA mark. The disordered stretch occupies residues 569–594 (DSPGRPVPVATETSSMHGANETPSGR). The segment covering 579-591 (TETSSMHGANETP) has biased composition (polar residues). The interval 594 to 838 (RPREAKLVEF…DDLISKMEKI (245 aa)) is necessary but not sufficient for spindle localization. The stretch at 637–837 (LQYSQKDLDA…CDDLISKMEK (201 aa)) forms a coiled coil.

It belongs to the TACC family. Interacts with microtubules. Interacts with CKAP5 independently of clathrin. Interacts with CKAP5 and clathrin forming the TACC3/ch-TOG/clathrin complex located at spindle inter-microtubules bridges; TACC3 (phosphorylated at Ser-558 by AURKA) and CLTC are proposed to form a composite microtubule interaction surface. Interacts with CCDC100/CEP120. The coiled coil C-terminal region interacts with AH receptor nuclear translocator protein (ARNT) and ARNT2. Interacts with GCN5L2 and PCAF.

Its subcellular location is the cytoplasm. The protein resides in the cytoskeleton. It is found in the microtubule organizing center. It localises to the centrosome. The protein localises to the spindle. Its subcellular location is the spindle pole. Its function is as follows. Plays a role in the microtubule-dependent coupling of the nucleus and the centrosome. Involved in the processes that regulate centrosome-mediated interkinetic nuclear migration (INM) of neural progenitors. Acts as a component of the TACC3/ch-TOG/clathrin complex proposed to contribute to stabilization of kinetochore fibers of the mitotic spindle by acting as inter-microtubule bridge. The TACC3/ch-TOG/clathrin complex is required for the maintenance of kinetochore fiber tension. May be involved in the control of cell growth and differentiation. May contribute to cancer. The sequence is that of Transforming acidic coiled-coil-containing protein 3 (TACC3) from Homo sapiens (Human).